The following is a 510-amino-acid chain: Bifunctional pantoate ligase/cytidylate kinase (510 aa).

The pantoate--beta-alanine ligase stretch occupies residues 1–276 (MKKVIIRKTE…CGETRLIDHV (276 aa)). 29–36 (MGNLHDGH) contacts ATP. H36 acts as the Proton donor in catalysis. Residue Q61 coordinates (R)-pantoate. Q61 provides a ligand contact to beta-alanine. 150–153 (GEKD) contacts ATP. A (R)-pantoate-binding site is contributed by Q156. Position 187–190 (187–190 (LSSR)) interacts with ATP. The interval 277–510 (FLMKRRPIIA…DRIPKETEIK (234 aa)) is cytidylate kinase.

It in the N-terminal section; belongs to the pantothenate synthetase family. The protein in the C-terminal section; belongs to the cytidylate kinase family. Type 1 subfamily.

The protein localises to the cytoplasm. It carries out the reaction (R)-pantoate + beta-alanine + ATP = (R)-pantothenate + AMP + diphosphate + H(+). The catalysed reaction is CMP + ATP = CDP + ADP. The enzyme catalyses dCMP + ATP = dCDP + ADP. It participates in cofactor biosynthesis; (R)-pantothenate biosynthesis; (R)-pantothenate from (R)-pantoate and beta-alanine: step 1/1. Catalyzes the condensation of pantoate with beta-alanine in an ATP-dependent reaction via a pantoyl-adenylate intermediate. Its function is as follows. Catalyzes the transfer of a phosphate group from ATP to either CMP or dCMP to form CDP or dCDP and ADP, respectively. The chain is Bifunctional pantoate ligase/cytidylate kinase from Prochlorococcus marinus (strain MIT 9301).